We begin with the raw amino-acid sequence, 657 residues long: MVNSQGKITDSNPVPNHVLLNGLTDKAEKNQGIGNSLCSQYEEKVRPCIDLIDSLRALGVEQDLALPAIAVIGDQSSGKSSVLEALSGVALPRGSGIVTRCPLVLKLKKLINEDEWRGKVSYQDTEMEISDPSEVEVEINKAQDAIAGEGQGISHELISLEVSSPHVPDLTLIDLPGITRVAVGNQPADIGRQTKQLIRKYILKQETINLVVVPCNVDIATTEALSMAQEVDPDGDRTIGILTKPDLVDRGTEGKVVDVAQNLVCHLKKGYMIVKCRGQQDIQDQVSLAEALQKEKDFFEDHPHFRVLLEEGRATVPNLAEKLTSELITHICKTLPLLENQIKENHEKITEELQKYGSDVPEDEHEKMFFLIDKLNAFNQDISSLIQGEESVGEDESRLFTKIRNEFHKWSAVIEKKFQRGYKAIYKQMEKFENRYRGRELPGFVNYKTFEIIIKQQIKELEEPAVDMLHTITDMVQVAFGDISKANFDEFFNLYRTTKSKIEDIKFELEKEAEKSIRLHFQMEQIVYCQDHVYQRALQRVREKDSDEEKKKKTSSMSHDEVSSVNISLSEILEHLLAYRQEATNRISSHIPLIIQYFILQVYGQKLQNGMLQLLQDKDTYSWLLKERSDTSDKRKFLKERLARLAQARRRLAKFPG.

An N-acetylmethionine modification is found at Met1. In terms of domain architecture, Dynamin-type G spans 63 to 336 (DLALPAIAVI…LITHICKTLP (274 aa)). Residues 73–80 (GDQSSGKS) form a G1 motif region. 73 to 80 (GDQSSGKS) is a GTP binding site. The tract at residues 98–100 (VTR) is G2 motif. Residues 174–177 (DLPG) form a G3 motif region. Residues 174-178 (DLPGI) and 243-246 (TKPD) each bind GTP. Positions 243-246 (TKPD) are G4 motif. The interval 275-278 (KCRG) is G5 motif. The interval 337–362 (LLENQIKENHEKITEELQKYGSDVPE) is bundle signaling element (BSE). The interval 362 to 529 (EDEHEKMFFL…HFQMEQIVYC (168 aa)) is middle domain. The interval 363–627 (DEHEKMFFLI…KDTYSWLLKE (265 aa)) is stalk. Positions 540 to 551 (RVREKDSDEEKK) are enriched in basic and acidic residues. Residues 540-559 (RVREKDSDEEKKKKTSSMSH) are disordered. The interval 550 to 553 (KKKK) is critical for lipid-binding. The GED domain occupies 569–657 (LSEILEHLLA…ARRRLAKFPG (89 aa)).

This sequence belongs to the TRAFAC class dynamin-like GTPase superfamily. Dynamin/Fzo/YdjA family. As to quaternary structure, homooligomer. Oligomerizes into multimeric filamentous or ring-like structures by virtue of its stalk domain. Oligomerization is critical for GTPase activity, protein stability, and recognition of viral target structures. Interacts with TRPC1, TRPC3, TRPC4, TRPC5, TRPC6 and TRPC7. Interacts with HSPA5. Interacts with TUBB/TUBB5. Interacts with DDX39A and DDX39B. In terms of processing, ISGylated.

The protein resides in the cytoplasm. It is found in the endoplasmic reticulum membrane. It localises to the perinuclear region. Functionally, interferon-induced dynamin-like GTPase with antiviral activity. The polypeptide is Interferon-induced GTP-binding protein Mx1 (MX1) (Canis lupus familiaris (Dog)).